A 42-amino-acid chain; its full sequence is Delta-hexatoxin-Ar1a (42 aa).

4 disulfides stabilise this stretch: Cys1-Cys15, Cys8-Cys20, Cys14-Cys31, and Cys16-Cys42.

The protein belongs to the neurotoxin 06 (delta-actx) family. As to expression, expressed by the venom gland.

Its subcellular location is the secreted. Its function is as follows. Inhibits tetrodotoxin-sensitive voltage-gated sodium channels (Nav) by binding to site 3. It slows the inactivation, causes a prolongation of action potential duration resulting in repetitive firing in autonomic and motor nerve fibers. Does not depolarize the resting potential. Does not affect tetrodotoxin-resistant sodium channels. This lethal neurotoxin is active on both insect and mammalian voltage-gated sodium channels. This Atrax robustus (Sydney funnel-web spider) protein is Delta-hexatoxin-Ar1a.